We begin with the raw amino-acid sequence, 415 residues long: Beta-2 adrenergic receptor (415 aa).

Residues 1 to 34 are Extracellular-facing; it reads MGQPANRSVFLLAPNGSHAPDQGDSQERSEAWVV. 2 N-linked (GlcNAc...) asparagine glycosylation sites follow: N6 and N15. The helical transmembrane segment at 35–58 threads the bilayer; it reads GMGIVMSLIVLAIVFGNVLVITAI. The Cytoplasmic portion of the chain corresponds to 59-71; it reads ARFERLQTVTNYF. Residues 72 to 95 form a helical membrane-spanning segment; sequence ITSLACADLVMGLAVVPFGASHIL. Residues 96–106 are Extracellular-facing; sequence MKMWTFGNFWC. Cystine bridges form between C106–C191 and C184–C190. A helical membrane pass occupies residues 107 to 129; it reads EFWTSIDVLCVTASIETLCVIAV. Residues 130–150 lie on the Cytoplasmic side of the membrane; that stretch reads DRYFAITSPFKYQSLLTKNKA. Y141 bears the Phosphotyrosine mark. The helical transmembrane segment at 151–174 threads the bilayer; that stretch reads RVVILMVWIVSGLTSFLPIQMHWY. Residues 175 to 196 are Extracellular-facing; that stretch reads RATHQEAINCYAKETCCDFFTN. Residues 197–220 form a helical membrane-spanning segment; that stretch reads QAYAIASSIVSFYLPLVVMVFVYS. Residues 221–274 are Cytoplasmic-facing; that stretch reads RVFQVAQRQLQKIDRSEGRFHAQNLSQVEQDGRSGHGHRRSSKFCLKEHKALKT. A Phosphoserine modification is found at S246. Phosphoserine; by PKA occurs at positions 261 and 262. C265 carries the S-palmitoyl cysteine lipid modification. The chain crosses the membrane as a helical span at residues 275-298; sequence LGIIMGTFTLCWLPFFIVNIVHVI. Residues 299–305 are Extracellular-facing; that stretch reads QDNLIPK. The helical transmembrane segment at 306–329 threads the bilayer; that stretch reads EVYILLNWVGYVNSAFNPLIYCRS. The Cytoplasmic segment spans residues 330–415; it reads PDFRIAFQEL…RNCSTNDSLL (86 aa). Residue C341 is the site of S-palmitoyl cysteine attachment. Phosphoserine; by PKA occurs at positions 345 and 346. At S355 the chain carries Phosphoserine; by BARK. The segment at 379 to 415 is disordered; sequence SELLCEDPPGTEDRQGTVPSDSVDSQGRNCSTNDSLL. 2 positions are modified to 4-hydroxyproline: P387 and P397. Polar residues predominate over residues 395-415; the sequence is TVPSDSVDSQGRNCSTNDSLL. The short motif at 412 to 415 is the PDZ-binding element; the sequence is DSLL.

Belongs to the G-protein coupled receptor 1 family. Adrenergic receptor subfamily. ADRB2 sub-subfamily. Binds NHERF1 and GPRASP1. Interacts with ARRB1 and ARRB2. Interacts with SRC. Interacts with USP20 and USP33. Interacts with VHL; the interaction, which is increased on hydroxylation of ADRB2, ubiquitinates ADRB2 leading to its degradation. Interacts with EGLN3; the interaction hydroxylates ADRB2 facilitating VHL-E3 ligase-mediated ubiquitination. Interacts (via PDZ-binding motif) with SNX27 (via PDZ domain); the interaction is required when endocytosed to prevent degradation in lysosomes and promote recycling to the plasma membrane. Interacts with CNIH4. Interacts with ARRDC3. Interacts with NEDD4. Interacts with MARCHF2. Post-translationally, palmitoylated; may reduce accessibility of Ser-345 and Ser-346 by anchoring Cys-341 to the plasma membrane. Agonist stimulation promotes depalmitoylation and further allows Ser-345 and Ser-346 phosphorylation. Phosphorylated by PKA and BARK upon agonist stimulation, which mediates homologous desensitization of the receptor. PKA-mediated phosphorylation seems to facilitate phosphorylation by BARK. In terms of processing, phosphorylation of Tyr-141 is induced by insulin and leads to supersensitization of the receptor. Post-translationally, polyubiquitinated. Agonist-induced ubiquitination leads to sort internalized receptors to the lysosomes for degradation. Deubiquitination by USP20 and USP33, leads to ADRB2 recycling and resensitization after prolonged agonist stimulation. USP20 and USP33 are constitutively associated and are dissociated immediately after agonist stimulation. Ubiquitination by the VHL-E3 ligase complex is oxygen-dependent. Hydroxylation by EGLN3 occurs only under normoxia and increases the interaction with VHL and the subsequent ubiquitination and degradation of ADRB2. In terms of processing, palmitoylated. Mainly palmitoylated at Cys-341. Palmitoylation may reduce accessibility of phosphorylation sites by anchoring the receptor to the plasma membrane. Agonist stimulation promotes depalmitoylation and further allows Ser-345 and Ser-346 phosphorylation. Also undergoes transient, ligand-induced palmitoylation at Cys-265 probably by ZDHHC9, ZDHHC14 and ZDHHC18 within the Golgi. Palmitoylation at Cys-265 requires phosphorylation by PKA and receptor internalization and stabilizes the receptor. Could be depalmitoylated by LYPLA1 at the plasma membrane.

The protein localises to the cell membrane. It is found in the early endosome. It localises to the golgi apparatus. Its function is as follows. Beta-adrenergic receptors mediate the catecholamine-induced activation of adenylate cyclase through the action of G proteins. The beta-2-adrenergic receptor binds epinephrine with an approximately 30-fold greater affinity than it does norepinephrine. In Canis lupus familiaris (Dog), this protein is Beta-2 adrenergic receptor (ADRB2).